The chain runs to 297 residues: Protoheme IX farnesyltransferase (297 aa).

A run of 9 helical transmembrane segments spans residues 23–43 (VTQLAVFCAVIGMFLAAPGMP), 49–69 (VFGTLGIWLLAAAAFAINCLI), 93–113 (IQVLSLSGLLGGAGMLVLYHL), 117–137 (LTMWLTFATFVGYAIIYTVIL), 144–164 (NIVIGGLSGAMPPALGWAAVA), 171–191 (AWVLVLIIFIWTPPHFWALAL), 215–235 (RLHILLYSFALLATTLLPYAI), 238–258 (SGALYLASALALGGMFVWYAW), and 275–295 (FSILYLALLFGALLIDHWVGL).

It belongs to the UbiA prenyltransferase family. Protoheme IX farnesyltransferase subfamily.

The protein localises to the cell inner membrane. The catalysed reaction is heme b + (2E,6E)-farnesyl diphosphate + H2O = Fe(II)-heme o + diphosphate. Its pathway is porphyrin-containing compound metabolism; heme O biosynthesis; heme O from protoheme: step 1/1. In terms of biological role, converts heme B (protoheme IX) to heme O by substitution of the vinyl group on carbon 2 of heme B porphyrin ring with a hydroxyethyl farnesyl side group. This is Protoheme IX farnesyltransferase from Bordetella pertussis (strain Tohama I / ATCC BAA-589 / NCTC 13251).